A 359-amino-acid polypeptide reads, in one-letter code: Serpentine receptor class epsilon-13 (359 aa).

7 helical membrane-spanning segments follow: residues 33–53 (YLFV…YYLL), 74–94 (AIYL…ILLI), 111–131 (ISLF…AFVA), 150–170 (WLVG…ALDF), 180–200 (VTIF…NFLL), 237–257 (LALS…IDNL), and 266–286 (LNTV…PFVI).

It belongs to the nematode receptor-like protein sre family.

The protein resides in the membrane. This Caenorhabditis elegans protein is Serpentine receptor class epsilon-13 (sre-13).